The primary structure comprises 359 residues: AA9 family lytic polysaccharide monooxygenase C (359 aa).

A signal peptide spans 1 to 16 (MKTGSILAALVASASA). The Cu(2+) site is built by His-17 and His-99. 2 disulfide bridges follow: Cys-55–Cys-185 and Cys-155–Cys-243. O2 is bound by residues His-171 and Gln-180. Position 182 (Tyr-182) interacts with Cu(2+). Asn-189 and Asn-284 each carry an N-linked (GlcNAc...) asparagine glycan. The tract at residues 244 to 320 (PAGGSGGSSP…NPQPTNGGNS (77 aa)) is disordered. Residues 251–296 (SSPAPATTASTPKPTSASAPKPVSTTASTPKPTNGSGSGTGAAHST) are compositionally biased toward low complexity. Polar residues predominate over residues 307 to 319 (TKASNPQPTNGGN). Residues 323 to 358 (RAAALYGQCGGKGWTGPTSCASGTCKFSNDWYSQCL) enclose the CBM1 domain.

Belongs to the polysaccharide monooxygenase AA9 family. Cu(2+) serves as cofactor.

It is found in the secreted. The catalysed reaction is [(1-&gt;4)-beta-D-glucosyl]n+m + reduced acceptor + O2 = 4-dehydro-beta-D-glucosyl-[(1-&gt;4)-beta-D-glucosyl]n-1 + [(1-&gt;4)-beta-D-glucosyl]m + acceptor + H2O.. With respect to regulation, activity in inhibited by excessive amounts of H(2)O(2). In terms of biological role, lytic polysaccharide monooxygenase (LPMO) that depolymerizes crystalline and amorphous polysaccharides via the oxidation of scissile alpha- or beta-(1-4)-glycosidic bonds, yielding C4 oxidation products. Catalysis by LPMOs requires the reduction of the active-site copper from Cu(II) to Cu(I) by a reducing agent and H(2)O(2) or O(2) as a cosubstrate. Degrades various hemicelluloses, in particular xyloglucan. Active on tamarind xyloglucan and konjac glucomannan. Acts on the glucose backbone of xyloglucan, accepting various substitutions (xylose, galactose) in almost allpositions. In contrast to all previously characterized LPMOs, which are active only on polysaccharides, is able to cleave soluble cello-oligosaccharides as short as a tetramer. The cello-oligosaccharide products released by this enzyme contain a C4 gemdiol/keto group at the non-reducing end. Binds to the inner wood cell wall layer and consumes enzymatically generated H(2)O(2). The polypeptide is AA9 family lytic polysaccharide monooxygenase C (gh61-3) (Neurospora crassa (strain ATCC 24698 / 74-OR23-1A / CBS 708.71 / DSM 1257 / FGSC 987)).